The following is a 342-amino-acid chain: Galactose mutarotase (342 aa).

Beta-D-galactose-binding positions include 81–82 (NR) and His107. A Phosphoserine modification is found at Ser124. The active-site Proton donor is His176. Residues 176–178 (HSY), Asp243, Gln279, and Glu307 contribute to the beta-D-galactose site. Glu307 (proton acceptor) is an active-site residue.

This sequence belongs to the aldose epimerase family. As to quaternary structure, monomer.

The protein resides in the cytoplasm. The catalysed reaction is alpha-D-galactose = beta-D-galactose. It catalyses the reaction alpha-D-glucose = beta-D-glucose. It functions in the pathway carbohydrate metabolism; hexose metabolism. The protein operates within carbohydrate metabolism; galactose metabolism. Its function is as follows. Mutarotase that catalyzes the interconversion of beta-D-galactose and alpha-D-galactose during galactose metabolism. Beta-D-galactose is metabolized in the liver into glucose 1-phosphate, the primary metabolic fuel, by the action of four enzymes that constitute the Leloir pathway: GALM, GALK1 (galactokinase), GALT (galactose-1-phosphate uridylyltransferase) and GALE (UDP-galactose-4'-epimerase). Involved in the maintenance of the equilibrium between the beta- and alpha-anomers of galactose, therefore ensuring a sufficient supply of the alpha-anomer for GALK1. Also active on D-glucose although shows a preference for galactose over glucose. This is Galactose mutarotase (GALM) from Bos taurus (Bovine).